We begin with the raw amino-acid sequence, 91 residues long: Insertion element IS1 1 protein InsA (91 aa).

Belongs to the IS1 elements InsA family.

Absolutely required for transposition of IS1. The protein is Insertion element IS1 1 protein InsA (insA1) of Escherichia coli (strain K12).